Reading from the N-terminus, the 329-residue chain is Chlorophyllase-1, chloroplastic (329 aa).

A chloroplast-targeting transit peptide spans 1-21 (MAAMVDSKPAASVQGTPLLAT). The short motif at 145–149 (GHSRG) is the GXSXG element. Catalysis depends on Ser147, which acts as the Nucleophile. Active-site charge relay system residues include Asp169 and His242.

It belongs to the AB hydrolase superfamily. Lipase family.

It localises to the plastid. The protein resides in the chloroplast. It carries out the reaction a chlorophyll + H2O = a chlorophyllide + phytol + H(+). It participates in porphyrin-containing compound metabolism; chlorophyll degradation. Catalyzes the hydrolysis of ester bond in chlorophyll to yield chlorophyllide and phytol. The chain is Chlorophyllase-1, chloroplastic from Citrus unshiu (Satsuma mandarin).